Here is a 142-residue protein sequence, read N- to C-terminus: Serine protease inhibitor (142 aa).

Ser1 carries the N-acetylserine modification.

Serine protease inhibitor. Active against beta-trypsin and alpha-chymotrypsin with dissociation constants of 0.35 nM and 40 nM respectively. Inhibits factor XIa, but not other enzymes involved in coagulation and fibrinolysis. Does not inhibit subtilisin, lysyl endopeptidase, arginyl endopeptidase or papain. This is Serine protease inhibitor from Lentinula edodes (Shiitake mushroom).